A 289-amino-acid chain; its full sequence is uncharacterized protein (289 aa).

Helical transmembrane passes span 13 to 32, 37 to 59, 80 to 99, 104 to 121, 141 to 160, 165 to 183, 203 to 225, 235 to 252, and 265 to 287; these read INFA…LSGS, LIIS…HLND, IVTE…IFFI, EIAL…WLYS, VFTY…TIFS, VGVV…GFFL, VLSP…FVVI, TSSL…FAIY, and IISS…AIGC.

It localises to the cell membrane. This is an uncharacterized protein from Archaeoglobus fulgidus (strain ATCC 49558 / DSM 4304 / JCM 9628 / NBRC 100126 / VC-16).